A 402-amino-acid polypeptide reads, in one-letter code: AA9 family lytic polysaccharide monooxygenase E (402 aa).

Residues 1-16 form the signal peptide; that stretch reads MSRLVSFASLLAAVNA. His-17 contributes to the Cu(2+) binding site. 2 disulfides stabilise this stretch: Cys-72–Cys-194 and Cys-113–Cys-117. Asn-75 carries N-linked (GlcNAc...) asparagine glycosylation. His-102 is a Cu(2+) binding site. Asn-154 is a glycosylation site (N-linked (GlcNAc...) asparagine). O2 contacts are provided by His-180 and Gln-189. Residue Tyr-191 participates in Cu(2+) binding. Positions 364–400 constitute a CBM1 domain; sequence GSNPLYAQCGGLNFKGASGCVAGATCKKMNPYYSQCV.

This sequence belongs to the polysaccharide monooxygenase AA9 family. Cu(2+) serves as cofactor.

The protein localises to the secreted. It catalyses the reaction [(1-&gt;4)-beta-D-glucosyl]n+m + reduced acceptor + O2 = 4-dehydro-beta-D-glucosyl-[(1-&gt;4)-beta-D-glucosyl]n-1 + [(1-&gt;4)-beta-D-glucosyl]m + acceptor + H2O.. In terms of biological role, lytic polysaccharide monooxygenase (LPMO) that depolymerizes crystalline and amorphous polysaccharides via the oxidation of scissile alpha- or beta-(1-4)-glycosidic bonds, yielding C1 or C4 oxidation products. Catalysis by LPMOs requires the reduction of the active-site copper from Cu(II) to Cu(I) by a reducing agent and H(2)O(2) or O(2) as a cosubstrate. This Emericella nidulans (strain FGSC A4 / ATCC 38163 / CBS 112.46 / NRRL 194 / M139) (Aspergillus nidulans) protein is AA9 family lytic polysaccharide monooxygenase E.